The following is a 162-amino-acid chain: Large ribosomal subunit protein uL10 (162 aa).

Belongs to the universal ribosomal protein uL10 family. As to quaternary structure, part of the ribosomal stalk of the 50S ribosomal subunit. The N-terminus interacts with L11 and the large rRNA to form the base of the stalk. The C-terminus forms an elongated spine to which L12 dimers bind in a sequential fashion forming a multimeric L10(L12)X complex.

In terms of biological role, forms part of the ribosomal stalk, playing a central role in the interaction of the ribosome with GTP-bound translation factors. The chain is Large ribosomal subunit protein uL10 (rplJ) from Borreliella burgdorferi (strain ATCC 35210 / DSM 4680 / CIP 102532 / B31) (Borrelia burgdorferi).